A 67-amino-acid chain; its full sequence is MARITVEDCLQKIPNRFQLVLAATYRARMLSQGHAPKVETKNKPGVTALREIAAGAVGIEMLRKVPG.

Belongs to the RNA polymerase subunit omega family. As to quaternary structure, the RNAP catalytic core consists of 2 alpha, 1 beta, 1 beta' and 1 omega subunit. When a sigma factor is associated with the core the holoenzyme is formed, which can initiate transcription.

It carries out the reaction RNA(n) + a ribonucleoside 5'-triphosphate = RNA(n+1) + diphosphate. Its function is as follows. Promotes RNA polymerase assembly. Latches the N- and C-terminal regions of the beta' subunit thereby facilitating its interaction with the beta and alpha subunits. The sequence is that of DNA-directed RNA polymerase subunit omega from Leptothrix cholodnii (strain ATCC 51168 / LMG 8142 / SP-6) (Leptothrix discophora (strain SP-6)).